The following is a 157-amino-acid chain: Putative pre-16S rRNA nuclease (157 aa).

The protein belongs to the YqgF nuclease family.

The protein localises to the cytoplasm. Could be a nuclease involved in processing of the 5'-end of pre-16S rRNA. The polypeptide is Putative pre-16S rRNA nuclease (Orientia tsutsugamushi (strain Ikeda) (Rickettsia tsutsugamushi)).